The primary structure comprises 208 residues: Large ribosomal subunit protein uL3 (208 aa).

An N5-methylglutamine modification is found at Q149.

The protein belongs to the universal ribosomal protein uL3 family. As to quaternary structure, part of the 50S ribosomal subunit. Forms a cluster with proteins L14 and L19. In terms of processing, methylated by PrmB.

In terms of biological role, one of the primary rRNA binding proteins, it binds directly near the 3'-end of the 23S rRNA, where it nucleates assembly of the 50S subunit. This is Large ribosomal subunit protein uL3 from Histophilus somni (strain 129Pt) (Haemophilus somnus).